Here is a 160-residue protein sequence, read N- to C-terminus: MVPKLFTSQICLLLLLGLSGVGGSLHAKPRQFTRAQWFAIQHVSLNPPQCTTAMRVINNYQRRCKDQNTFLRTTFANVVNVCGNPNITCPRNRTLHNCHRSRFQVPLLHCNLTNPGAQNISNCKYADRTERRFYVVACDNRDPRDSPRYPVVPVHLDTTI.

The first 27 residues, 1 to 27 (MVPKLFTSQICLLLLLGLSGVGGSLHA), serve as a signal peptide directing secretion. The required for nearly all of the bactericidal activities; partially involved in LPS-binding stretch occupies residues 28-72 (KPRQFTRAQWFAIQHVSLNPPQCTTAMRVINNYQRRCKDQNTFLR). H42 functions as the Proton acceptor in the catalytic mechanism. 4 disulfide bridges follow: C50/C110, C64/C123, C82/C138, and C89/C98. Y60 bears the 3'-nitrotyrosine mark. Position 65–69 (65–69 (KDQNT)) interacts with substrate. N-linked (GlcNAc...) asparagine glycans are attached at residues N86, N92, N111, and N119. The Proton donor role is filled by H155.

This sequence belongs to the pancreatic ribonuclease family. As to quaternary structure, interacts with bacterial lipopolysaccharide (LPS) and lipoteichoic acid (LTA). In vitro interacts with phospholipid bilayers.

The protein resides in the secreted. Cytotoxin and helminthotoxin with low-efficiency ribonuclease activity. Possesses a wide variety of biological activities. Exhibits antibacterial activity. The polypeptide is Eosinophil cationic protein (RNASE3) (Pongo pygmaeus (Bornean orangutan)).